A 776-amino-acid chain; its full sequence is LPS-assembly protein LptD (776 aa).

Positions 1 to 24 are cleaved as a signal peptide; the sequence is MQHFSRTFLAASIATALFAPYAQA.

This sequence belongs to the LptD family. In terms of assembly, component of the lipopolysaccharide transport and assembly complex. Interacts with LptE and LptA.

The protein resides in the cell outer membrane. In terms of biological role, together with LptE, is involved in the assembly of lipopolysaccharide (LPS) at the surface of the outer membrane. The chain is LPS-assembly protein LptD from Vibrio vulnificus (strain YJ016).